Consider the following 4351-residue polypeptide: Protocadherin Fat 2 (4351 aa).

An N-terminal signal peptide occupies residues 1-18 (MTLVLLGLAILLLHRAAC). Residues 19-4050 (EKSLEETIPP…IKRGDWGQQE (4032 aa)) lie on the Extracellular side of the membrane. 2 Cadherin domains span residues 34–148 (THSL…KPLF) and 149–256 (SPPS…PPAI). N-linked (GlcNAc...) asparagine glycans are attached at residues N39, N210, N280, and N330. 31 consecutive Cadherin domains span residues 363–458 (EKAV…APVF), 459–564 (NRSS…QPMF), 565–669 (EEVN…VPVQ), 716–820 (DHFP…PPRF), 821–925 (PPGG…PPQC), 926–1032 (ITEH…SPHF), 1033–1142 (SSFV…RPVF), 1138–1242 (SRPV…PPMF), 1243–1346 (SHKL…SSIP), 1350–1448 (DESY…RPQF), 1449–1555 (LQDH…SPHF), 1556–1660 (TQLR…APVF), 1661–1758 (SKDE…PPAF), 1759–1872 (GKPT…PPRF), 1873–1968 (SEQI…SLQF), 1969–2070 (DQDV…IPEF), 2071–2171 (QHLP…NPLF), 2172–2272 (QSPY…PPTF), 2273–2379 (SQLV…PPKF), 2380–2481 (REPQ…SPEF), 2482–2585 (QQNV…APQF), 2586–2692 (KASG…LPKF), 2693–2799 (SEPL…RPVF), 2800–2908 (EADP…PPRF), 2909–3013 (ASED…SPQC), 3014–3115 (SQLL…APRF), 3116–3220 (FPSH…LPIF), 3221–3323 (LNAE…HPRF), 3324–3428 (THDL…PPRF), 3429–3533 (FQLN…PPST), and 3534–3631 (LPLE…VPQQ). N-linked (GlcNAc...) asparagine glycans are attached at residues N459, N568, N627, and N789. N-linked (GlcNAc...) asparagine glycosylation occurs at N996. 3 N-linked (GlcNAc...) asparagine glycosylation sites follow: N1175, N1276, and N1417. Residues N1899, N1998, N2007, N2102, N2165, N2183, N2325, N2368, N2387, N2430, N2470, N2547, and N2597 are each glycosylated (N-linked (GlcNAc...) asparagine). Residues N3127, N3278, and N3312 are each glycosylated (N-linked (GlcNAc...) asparagine). N-linked (GlcNAc...) asparagine glycosylation is found at N3432, N3603, N3770, N3774, N3815, N3842, N3875, and N3906. Residues 3775-3946 (GTTLRFSGQS…RLETWALSQC (172 aa)) form the Laminin G-like domain. Disulfide bonds link C3914/C3946, C3953/C3964, C3958/C3974, and C3976/C3985. 2 consecutive EGF-like domains span residues 3949 to 3986 (PGTA…RNCE) and 3988 to 4024 (GREN…DRCE). N3991 carries an N-linked (GlcNAc...) asparagine glycan. 3 cysteine pairs are disulfide-bonded: C3992–C4003, C3997–C4012, and C4014–C4023. A helical membrane pass occupies residues 4051–4071 (FLVITVALPLVIIATVGLLLY). Residues 4072 to 4351 (CRRRKSHKPV…DYGSCEEVMF (280 aa)) lie on the Cytoplasmic side of the membrane. Residues 4316–4340 (VNGGPATGRSQPRAPPNYEGSDMVE) are disordered.

As to quaternary structure, homodimer. Cerebellum-specific expression. Expressed in thin parallel fibers of cerebellar granule cells.

It localises to the cell membrane. It is found in the cell junction. Its subcellular location is the golgi apparatus. The protein resides in the trans-Golgi network. Its function is as follows. Involved in the regulation of cell migration. May be involved in mediating the organization of the parallel fibers of granule cells during cerebellar development. This is Protocadherin Fat 2 (Fat2) from Rattus norvegicus (Rat).